The chain runs to 364 residues: Flavonoid 3'-O-methyltransferase 3 (364 aa).

An S-adenosyl-L-methionine-binding site is contributed by aspartate 232. Histidine 270 acts as the Proton acceptor in catalysis.

Belongs to the class I-like SAM-binding methyltransferase superfamily. Cation-independent O-methyltransferase family. In terms of assembly, homodimer.

It carries out the reaction quercetin + S-adenosyl-L-methionine = isorhamnetin + S-adenosyl-L-homocysteine + H(+). The catalysed reaction is luteolin + S-adenosyl-L-methionine = chrysoeriol + S-adenosyl-L-homocysteine + H(+). It catalyses the reaction a 3'-hydroxyflavone + S-adenosyl-L-methionine = a 3'-methoxyflavone + S-adenosyl-L-homocysteine + H(+). The enzyme catalyses rhamnetin + S-adenosyl-L-methionine = rhamnacene + S-adenosyl-L-homocysteine + H(+). It carries out the reaction 3',4',7,8-tetrahydroxyflavone + S-adenosyl-L-methionine = 4',7,8-trihydroxy-3'-methoxyflavone-7-olate + S-adenosyl-L-homocysteine + H(+). The catalysed reaction is taxifolin + S-adenosyl-L-methionine = taxifolin 3'-methyl ether + S-adenosyl-L-homocysteine + H(+). The protein operates within flavonoid metabolism. Its function is as follows. Flavonoid 3'-O-methyltransferase involved in the biosynthesis of polymethoxylated flavonoids natural products such as pebrellin, aroma compounds which contribute to the flavor of peppermint, and exhibit pharmacological activities such as anti-allergic, anti-oxidant, antibacterial, anti-proliferative, and anti-inflammatory effects. Catalyzes S-adenosylmethionine-dependent regioselective 3'-O-methylation of flavonoids; active on various hydroxylated flavonoid substrates, including quercetin, rhamnetin, luteolin (LUT), 7,8,3'4'-tetrahydroxy-flavone and taxifolin, and, with a lower efficiency, eupatorin and hesperetin. In Mentha piperita (Peppermint), this protein is Flavonoid 3'-O-methyltransferase 3.